A 269-amino-acid polypeptide reads, in one-letter code: Tryptophan synthase alpha chain (269 aa).

Residues Glu-49 and Asp-60 each act as proton acceptor in the active site.

This sequence belongs to the TrpA family. In terms of assembly, tetramer of two alpha and two beta chains.

It catalyses the reaction (1S,2R)-1-C-(indol-3-yl)glycerol 3-phosphate + L-serine = D-glyceraldehyde 3-phosphate + L-tryptophan + H2O. Its pathway is amino-acid biosynthesis; L-tryptophan biosynthesis; L-tryptophan from chorismate: step 5/5. In terms of biological role, the alpha subunit is responsible for the aldol cleavage of indoleglycerol phosphate to indole and glyceraldehyde 3-phosphate. The sequence is that of Tryptophan synthase alpha chain from Actinobacillus pleuropneumoniae serotype 7 (strain AP76).